Here is a 403-residue protein sequence, read N- to C-terminus: Putative queuine tRNA-ribosyltransferase (403 aa).

The Proton acceptor role is filled by Asp-91. Residues 91–95 (DSGGF), Asp-177, Gln-218, and Gly-245 contribute to the substrate site. An RNA binding region spans residues 275-281 (GIGAIED). The active-site Nucleophile is Asp-294. The tract at residues 299-303 (ARWAR) is RNA binding; important for wobble base 34 recognition. Zn(2+)-binding residues include Cys-341, Cys-343, Cys-346, and His-372.

Belongs to the queuine tRNA-ribosyltransferase family. Homodimer. Within each dimer, one monomer is responsible for RNA recognition and catalysis, while the other monomer binds to the replacement base PreQ1. It depends on Zn(2+) as a cofactor.

The enzyme catalyses 7-aminomethyl-7-carbaguanine + guanosine(34) in tRNA = 7-aminomethyl-7-carbaguanosine(34) in tRNA + guanine. Functionally, catalyzes the base-exchange of a guanine (G) residue with the queuine precursor 7-aminomethyl-7-deazaguanine (PreQ1) at position 34 (anticodon wobble position) in tRNAs with GU(N) anticodons (tRNA-Asp, -Asn, -His and -Tyr). Catalysis occurs through a double-displacement mechanism. The nucleophile active site attacks the C1' of nucleotide 34 to detach the guanine base from the RNA, forming a covalent enzyme-RNA intermediate. The proton acceptor active site deprotonates the incoming PreQ1, allowing a nucleophilic attack on the C1' of the ribose to form the product. After dissociation, two additional enzymatic reactions on the tRNA convert PreQ1 to queuine (Q), resulting in the hypermodified nucleoside queuosine (7-(((4,5-cis-dihydroxy-2-cyclopenten-1-yl)amino)methyl)-7-deazaguanosine). This chain is Putative queuine tRNA-ribosyltransferase, found in Archaeoglobus fulgidus (strain ATCC 49558 / DSM 4304 / JCM 9628 / NBRC 100126 / VC-16).